We begin with the raw amino-acid sequence, 334 residues long: N-acetylmuramoyl-L-alanine amidase sle1 (334 aa).

An N-terminal signal peptide occupies residues 1 to 25; sequence MQKKVIAAIIGTSAISAVAATQANA. A LysM 1 domain is found at 27 to 70; that stretch reads TTHTVKPGESVWAISNKYGISIAKLKSLNNLTSNLIFPNQVLKV. Residues 71-86 show a composition bias toward low complexity; sequence SGSSNSTSNSSRPSTN. The interval 71–90 is disordered; the sequence is SGSSNSTSNSSRPSTNSGGG. The LysM 2 domain maps to 91–134; that stretch reads SYYTVQAGDSLSLIASKYGTTYQNIMRLNGLNNFFIYPGQKLKV. The tract at residues 137-156 is disordered; it reads TASSSNSTSNSSRPSTNSSG. Positions 158–201 constitute a LysM 3 domain; it reads SYYTVQAGDSLSLIASKYGTTYQNIMRLNGLNNFFIYPGQKLKV. The Peptidase C51 domain occupies 210 to 334; the sequence is GSTTTTNRGY…YQVNNYRYIH (125 aa).

The protein resides in the secreted. It is found in the cell surface. The catalysed reaction is Hydrolyzes the link between N-acetylmuramoyl residues and L-amino acid residues in certain cell-wall glycopeptides.. Peptidoglycan hydrolase involved in the splitting of the septum during cell division. This is N-acetylmuramoyl-L-alanine amidase sle1 (sle1) from Staphylococcus aureus (strain MRSA252).